A 962-amino-acid polypeptide reads, in one-letter code: Glycine dehydrogenase (decarboxylating) (962 aa).

The residue at position 709 (K709) is an N6-(pyridoxal phosphate)lysine.

Belongs to the GcvP family. In terms of assembly, the glycine cleavage system is composed of four proteins: P, T, L and H. It depends on pyridoxal 5'-phosphate as a cofactor.

It catalyses the reaction N(6)-[(R)-lipoyl]-L-lysyl-[glycine-cleavage complex H protein] + glycine + H(+) = N(6)-[(R)-S(8)-aminomethyldihydrolipoyl]-L-lysyl-[glycine-cleavage complex H protein] + CO2. The glycine cleavage system catalyzes the degradation of glycine. The P protein binds the alpha-amino group of glycine through its pyridoxal phosphate cofactor; CO(2) is released and the remaining methylamine moiety is then transferred to the lipoamide cofactor of the H protein. The sequence is that of Glycine dehydrogenase (decarboxylating) from Shewanella amazonensis (strain ATCC BAA-1098 / SB2B).